A 601-amino-acid polypeptide reads, in one-letter code: MGLCTSKPNSSNSDQTPARNSPLPASESVKPSSSSVNGEDQCVTTTNNEGKKSPFFPFYSPSPAHYFFSKKTPARSPATNSTNSTPKRFFKRPFPPPSPAKHIRAVLARRHGSVKPNSSAIPEGSEAEGGGVGLDKSFGFSKSFASKYELGDEVGRGHFGYTCAAKFKKGDNKGQQVAVKVIPKAKMTTAIAIEDVRREVKILRALSGHNNLPHFYDAYEDHDNVYIVMELCEGGELLDRILSRGGKYTEEDAKTVMIQILNVVAFCHLQGVVHRDLKPENFLFTSKEDTSQLKAIDFGLSDYVRPDERLNDIVGSAYYVAPEVLHRSYSTEADIWSVGVIVYILLCGSRPFWARTESGIFRAVLKADPSFDDPPWPLLSSEARDFVKRLLNKDPRKRLTAAQALSHPWIKDSNDAKVPMDILVFKLMRAYLRSSSLRKAALRALSKTLTVDELFYLREQFALLEPSKNGTISLENIKSALMKMATDAMKDSRIPEFLGQLSALQYRRMDFEEFCAAALSVHQLEALDRWEQHARCAYELFEKEGNRPIMIDELASELGLGPSVPVHAVLHDWLRHTDGKLSFLGFVKLLHGVSSRTIKAH.

Over residues 1-19 (MGLCTSKPNSSNSDQTPAR) the composition is skewed to polar residues. Disordered stretches follow at residues 1–55 (MGLC…KSPF) and 70–98 (KKTPARSPATNSTNSTPKRFFKRPFPPPS). Gly2 carries N-myristoyl glycine lipidation. Low complexity predominate over residues 26–35 (SESVKPSSSS). The segment covering 36 to 48 (VNGEDQCVTTTNN) has biased composition (polar residues). In terms of domain architecture, Protein kinase spans 148 to 410 (YELGDEVGRG…AAQALSHPWI (263 aa)). ATP is bound by residues 154 to 162 (VGRGHFGYT) and Lys180. Residue Asp276 is the Proton acceptor of the active site. At Ser316 the chain carries Phosphoserine. An autoinhibitory domain region spans residues 415–445 (DAKVPMDILVFKLMRAYLRSSSLRKAALRAL). Residues 434 to 454 (SSSLRKAALRALSKTLTVDEL) are calmodulin binding (CaMBD). EF-hand domains are found at residues 452-488 (DELFYLREQFALLEPSKNGTISLENIKSALMKMATDA), 489-524 (MKDSRIPEFLGQLSALQYRRMDFEEFCAAALSVHQL), 525-564 (EALDRWEQHARCAYELFEKEGNRPIMIDELASELGLGPSV), and 567-596 (HAVLHDWLRHTDGKLSFLGFVKLLHGVSSR). Ser467, Asn469, Thr471, Asn476, Arg508, Glu513, Asn546, Glu553, Asp578, and Lys580 together coordinate Ca(2+). Ser582 carries the post-translational modification Phosphoserine.

It belongs to the protein kinase superfamily. Ser/Thr protein kinase family. CDPK subfamily. In terms of assembly, binds calmodulin (CaM) in a calcium-dependent manner.

It localises to the membrane. It carries out the reaction L-seryl-[protein] + ATP = O-phospho-L-seryl-[protein] + ADP + H(+). It catalyses the reaction L-threonyl-[protein] + ATP = O-phospho-L-threonyl-[protein] + ADP + H(+). Activated by calcium and calmodulin. Autophosphorylation may play an important role in the regulation of the kinase activity. Its function is as follows. May play a role in signal transduction pathways that involve calcium as a second messenger. The protein is CDPK-related kinase 5 (CRK5) of Arabidopsis thaliana (Mouse-ear cress).